Here is a 265-residue protein sequence, read N- to C-terminus: Eukaryotic translation initiation factor 3 subunit J (265 aa).

The span at alanine 24–aspartate 34 shows a compositional bias: acidic residues. The segment at alanine 24–aspartate 74 is disordered. Over residues glutamate 35–lysine 45 the composition is skewed to basic and acidic residues. Residues proline 46–asparagine 57 show a composition bias toward basic residues. Coiled coils occupy residues arginine 78–glutamate 106 and isoleucine 190–lysine 220.

This sequence belongs to the eIF-3 subunit J family. Component of the eukaryotic translation initiation factor 3 (eIF-3) complex.

It is found in the cytoplasm. Component of the eukaryotic translation initiation factor 3 (eIF-3) complex, which is involved in protein synthesis of a specialized repertoire of mRNAs and, together with other initiation factors, stimulates binding of mRNA and methionyl-tRNAi to the 40S ribosome. The eIF-3 complex specifically targets and initiates translation of a subset of mRNAs involved in cell proliferation. The sequence is that of Eukaryotic translation initiation factor 3 subunit J from Candida glabrata (strain ATCC 2001 / BCRC 20586 / JCM 3761 / NBRC 0622 / NRRL Y-65 / CBS 138) (Yeast).